The primary structure comprises 568 residues: Sphingosine-1-phosphate lyase 1 (568 aa).

At 1–41 (MPSTDLLKLKDFEPYLEILEAYSTKAKNYVNGYCTKYEPWQ) the chain is on the lumenal side. The chain crosses the membrane as a helical; Signal-anchor for type III membrane protein span at residues 42–62 (LIAGSVLCTLLVVWVYELIFQ). Over 63–568 (PESLWSRFKN…NQMNGSPKPR (506 aa)) the chain is Cytoplasmic. At K353 the chain carries N6-(pyridoxal phosphate)lysine; alternate. Position 353 is an N6-acetyllysine; alternate (K353). 2 positions are modified to 3'-nitrotyrosine: Y356 and Y366. S564 is modified (phosphoserine).

This sequence belongs to the group II decarboxylase family. Sphingosine-1-phosphate lyase subfamily. In terms of assembly, homodimer. The cofactor is pyridoxal 5'-phosphate.

It is found in the endoplasmic reticulum membrane. It catalyses the reaction sphinganine 1-phosphate = hexadecanal + phosphoethanolamine. The enzyme catalyses sphing-4-enine 1-phosphate = (2E)-hexadecenal + phosphoethanolamine. It functions in the pathway lipid metabolism; sphingolipid metabolism. Cleaves phosphorylated sphingoid bases (PSBs), such as sphingosine-1-phosphate, into fatty aldehydes and phosphoethanolamine. Elevates stress-induced ceramide production and apoptosis. Required for global lipid homeostasis in liver and cholesterol homeostasis in fibroblasts. Involved in the regulation of pro-inflammatory response and neutrophil trafficking. Modulates neuronal autophagy via phosphoethanolamine production which regulates accumulation of aggregate-prone proteins such as APP. Seems to play a role in establishing neuronal contact sites and axonal maintenance. The protein is Sphingosine-1-phosphate lyase 1 of Rattus norvegicus (Rat).